We begin with the raw amino-acid sequence, 167 residues long: MDRGRPAGSPLSASAEPAPLAAAIRDSRPGRTGPGPAGPGGGSRSGSGRPAAANAARERSRVQTLRHAFLELQRTLPSVPPDTKLSKLDVLLLATTYIAHLTRSLQDDAEAPADAGLGALRGDGYLHPVKKWPMRSRLYIGATGQFLKHSVSGEKTNHDNTPTDSQP.

Over residues 1-23 the composition is skewed to low complexity; sequence MDRGRPAGSPLSASAEPAPLAAA. The segment at 1–60 is disordered; the sequence is MDRGRPAGSPLSASAEPAPLAAAIRDSRPGRTGPGPAGPGGGSRSGSGRPAAANAARERS. Positions 32-45 are enriched in gly residues; the sequence is TGPGPAGPGGGSRS. Low complexity predominate over residues 46–55; that stretch reads GSGRPAAANA. Residues 49-101 enclose the bHLH domain; the sequence is RPAAANAARERSRVQTLRHAFLELQRTLPSVPPDTKLSKLDVLLLATTYIAHL.

As to quaternary structure, efficient DNA binding requires dimerization with another bHLH protein.

The protein resides in the nucleus. In terms of biological role, putative transcription factor. This Homo sapiens (Human) protein is Transcription factor 24 (TCF24).